The following is a 225-amino-acid chain: UPF0758 protein BCB4264_A4572 (225 aa).

Residues 103 to 225 (SIRSPEDCAK…FVSLKEKGHI (123 aa)) enclose the MPN domain. Residues H174, H176, and D187 each contribute to the Zn(2+) site. Positions 174-187 (HNHPSGDPTPSRED) match the JAMM motif motif.

Belongs to the UPF0758 family.

The protein is UPF0758 protein BCB4264_A4572 of Bacillus cereus (strain B4264).